A 56-amino-acid chain; its full sequence is Large ribosomal subunit protein bL33 (56 aa).

It belongs to the bacterial ribosomal protein bL33 family.

The sequence is that of Large ribosomal subunit protein bL33 from Campylobacter hominis (strain ATCC BAA-381 / DSM 21671 / CCUG 45161 / LMG 19568 / NCTC 13146 / CH001A).